Reading from the N-terminus, the 496-residue chain is MEIKVGNIPQLKWAGDALAIGLFEDAIKLTEDAIELTEEMAELDEMLSGTLSELIKETEFKGKANSSVSTRVGIKTSIRKIIVVGLGKLEKFKLDSLRQAAATCGRLAKKERCKTLGISLPMCQDADSTAIAITEGIELALHQDNRFKSEPENLGPDLEKVELIGLAASDEAIAHARKICSGVIFARELVAAPANSCTPITMAETAQTLAKEFGLTLEILEKEDCEKLGMGAFLGVAQGSDLPPKFIHVTYKPEVTPRRKLAIVGKGLTFDSGGLNLKVSGSGIEMMKIDMGGAGTTFGTIKAIAQLKPDVEVHFISAVTENMVSGHAIHPGDFLTASNGKIIEVNNTDAEGRLTLADALVFAEKLGVDAIIDLATLTGACVVALGNDIAGLWSPNDNLAAEITAAAEKAGEKMWRMPLEEKYFEGLKAMHADMKNTGPRPGGAITAALFLKQFVKNTPWAHLDIAGPVWVDTENGYNNQGATGYGVRTLVNWILS.

The Mn(2+) site is built by Lys-266 and Asp-271. Lys-278 is an active-site residue. Mn(2+)-binding residues include Asp-290, Asp-349, and Glu-351. Arg-353 is an active-site residue.

It belongs to the peptidase M17 family. It depends on Mn(2+) as a cofactor.

The protein localises to the cytoplasm. The catalysed reaction is Release of an N-terminal amino acid, Xaa-|-Yaa-, in which Xaa is preferably Leu, but may be other amino acids including Pro although not Arg or Lys, and Yaa may be Pro. Amino acid amides and methyl esters are also readily hydrolyzed, but rates on arylamides are exceedingly low.. The enzyme catalyses Release of an N-terminal amino acid, preferentially leucine, but not glutamic or aspartic acids.. Presumably involved in the processing and regular turnover of intracellular proteins. Catalyzes the removal of unsubstituted N-terminal amino acids from various peptides. The polypeptide is Probable cytosol aminopeptidase (Trichodesmium erythraeum (strain IMS101)).